Consider the following 576-residue polypeptide: Arginine--tRNA ligase (576 aa).

The short motif at 126 to 136 (ANPTGPMHIGH) is the 'HIGH' region element.

It belongs to the class-I aminoacyl-tRNA synthetase family. As to quaternary structure, monomer.

The protein localises to the cytoplasm. The catalysed reaction is tRNA(Arg) + L-arginine + ATP = L-arginyl-tRNA(Arg) + AMP + diphosphate. The chain is Arginine--tRNA ligase (argS) from Rickettsia prowazekii (strain Madrid E).